The chain runs to 373 residues: Putative zinc finger protein 012R (373 aa).

The C2H2-type zinc finger occupies 2–29; the sequence is FECTHCDLHFESKSKLATHQKTKKCTAH.

It belongs to the IIV-6 302L family.

The protein is Putative zinc finger protein 012R of Invertebrate iridescent virus 3 (IIV-3).